A 595-amino-acid polypeptide reads, in one-letter code: UvrABC system protein C (595 aa).

The region spanning 17 to 94 (IEPGCYLMKD…IKQYQPRYNI (78 aa)) is the GIY-YIG domain. Residues 199–234 (KTILHNLEQKMQESSESLDFERAKEYRDLIQHIHNL) enclose the UVR domain.

Belongs to the UvrC family. In terms of assembly, interacts with UvrB in an incision complex.

It localises to the cytoplasm. The UvrABC repair system catalyzes the recognition and processing of DNA lesions. UvrC both incises the 5' and 3' sides of the lesion. The N-terminal half is responsible for the 3' incision and the C-terminal half is responsible for the 5' incision. The polypeptide is UvrABC system protein C (Staphylococcus saprophyticus subsp. saprophyticus (strain ATCC 15305 / DSM 20229 / NCIMB 8711 / NCTC 7292 / S-41)).